The primary structure comprises 631 residues: Dolichyl-diphosphooligosaccharide--protein glycosyltransferase subunit 2 (631 aa).

A signal peptide spans 1-22 (MALPGSSTVFLLALTIIASTQA). The Lumenal segment spans residues 23-540 (LTPTHYLTKH…REPEKRPPTV (518 aa)). N106 carries an N-linked (GlcNAc...) asparagine glycan. K154 is covalently cross-linked (Glycyl lysine isopeptide (Lys-Gly) (interchain with G-Cter in ubiquitin)). A helical transmembrane segment spans residues 541–561 (VSNTFTALILSPLLLLFALWI). Topologically, residues 562–571 (RIGANVSNFT) are cytoplasmic. A helical membrane pass occupies residues 572 to 592 (FAPSTIVFHLGHAAMLGLMYV). The Lumenal segment spans residues 593 to 596 (YWTQ). The helical transmembrane segment at 597-617 (LNMFQTLKYLAILGSVTFLAG) threads the bilayer. Residues 618 to 631 (NRMLAQQAIKRTAH) lie on the Cytoplasmic side of the membrane.

This sequence belongs to the SWP1 family. As to quaternary structure, component of the oligosaccharyltransferase (OST) complex. OST exists in two different complex forms which contain common core subunits RPN1, RPN2, OST48, OST4, DAD1 and TMEM258, either STT3A or STT3B as catalytic subunits, and form-specific accessory subunits. STT3A complex assembly occurs through the formation of 3 subcomplexes. Subcomplex 1 contains RPN1 and TMEM258, subcomplex 2 contains the STT3A-specific subunits STT3A, DC2/OSTC, and KCP2 as well as the core subunit OST4, and subcomplex 3 contains RPN2, DAD1, and OST48. The STT3A complex can form stable complexes with the Sec61 complex or with both the Sec61 and TRAP complexes. Interacts with DDI2. Interacts with TMEM35A/NACHO.

Its subcellular location is the endoplasmic reticulum. The protein localises to the endoplasmic reticulum membrane. The protein operates within protein modification; protein glycosylation. Subunit of the oligosaccharyl transferase (OST) complex that catalyzes the initial transfer of a defined glycan (Glc(3)Man(9)GlcNAc(2) in eukaryotes) from the lipid carrier dolichol-pyrophosphate to an asparagine residue within an Asn-X-Ser/Thr consensus motif in nascent polypeptide chains, the first step in protein N-glycosylation. N-glycosylation occurs cotranslationally and the complex associates with the Sec61 complex at the channel-forming translocon complex that mediates protein translocation across the endoplasmic reticulum (ER). All subunits are required for a maximal enzyme activity. The chain is Dolichyl-diphosphooligosaccharide--protein glycosyltransferase subunit 2 from Bos taurus (Bovine).